A 184-amino-acid chain; its full sequence is ATP synthase subunit b, chloroplastic (184 aa).

The chain crosses the membrane as a helical span at residues 27-49; it reads LATNPINLSVVFGVLIFFGKGVL.

It belongs to the ATPase B chain family. F-type ATPases have 2 components, F(1) - the catalytic core - and F(0) - the membrane proton channel. F(1) has five subunits: alpha(3), beta(3), gamma(1), delta(1), epsilon(1). F(0) has four main subunits: a(1), b(1), b'(1) and c(10-14). The alpha and beta chains form an alternating ring which encloses part of the gamma chain. F(1) is attached to F(0) by a central stalk formed by the gamma and epsilon chains, while a peripheral stalk is formed by the delta, b and b' chains.

The protein resides in the plastid. It localises to the chloroplast thylakoid membrane. In terms of biological role, f(1)F(0) ATP synthase produces ATP from ADP in the presence of a proton or sodium gradient. F-type ATPases consist of two structural domains, F(1) containing the extramembraneous catalytic core and F(0) containing the membrane proton channel, linked together by a central stalk and a peripheral stalk. During catalysis, ATP synthesis in the catalytic domain of F(1) is coupled via a rotary mechanism of the central stalk subunits to proton translocation. Its function is as follows. Component of the F(0) channel, it forms part of the peripheral stalk, linking F(1) to F(0). The polypeptide is ATP synthase subunit b, chloroplastic (Olimarabidopsis pumila (Dwarf rocket)).